The chain runs to 305 residues: MEEEMTSILHPLDVSDTLDALVINAIDGTGNRDAIIEELSRQPMARMMMEVREINGVPTQFTGVSVYKLRVANCIRRLHLILAGTETDEEISSDIYYTQCIANPAFKGFIFMILTAMEDVVKTIGIPPPLLKYRFVSYHPAEPLDFALCLLISYLENRNVSSSDPSLYVQLQSFLKYAWSTVTPMRKMRRFLCITNTWLLNTLMELSSISPFDSNHVLPHYIIYKHLSSTNGVCDVLISLYECNNLGEAFQVPVSTRGKCSIVINKGLLNGAFQQKWLSDIICDWWHYGRNNLRGEECLFHTYQK.

Belongs to the herpesviridae cytoplasmic envelopment protein 1 family.

It localises to the virion. The protein localises to the virion tegument. It is found in the host cytoplasm. Its subcellular location is the host Golgi apparatus. Functionally, plays a critical role in cytoplasmic virus egress. Participates in the final step of tegumentation and envelope acquisition within the host cytoplasm. The polypeptide is Cytoplasmic envelopment protein 1 (MDV019) (Gallus gallus (Chicken)).